The following is a 443-amino-acid chain: Tubulin beta-3 chain (443 aa).

GTP is bound by residues glutamine 11, glutamate 69, serine 138, glycine 142, threonine 143, glycine 144, asparagine 204, and asparagine 226. A Mg(2+)-binding site is contributed by glutamate 69.

Belongs to the tubulin family. Dimer of alpha and beta chains. A typical microtubule is a hollow water-filled tube with an outer diameter of 25 nm and an inner diameter of 15 nM. Alpha-beta heterodimers associate head-to-tail to form protofilaments running lengthwise along the microtubule wall with the beta-tubulin subunit facing the microtubule plus end conferring a structural polarity. Microtubules usually have 13 protofilaments but different protofilament numbers can be found in some organisms and specialized cells. Mg(2+) is required as a cofactor.

The protein resides in the cytoplasm. It localises to the cytoskeleton. Functionally, tubulin is the major constituent of microtubules, a cylinder consisting of laterally associated linear protofilaments composed of alpha- and beta-tubulin heterodimers. Microtubules grow by the addition of GTP-tubulin dimers to the microtubule end, where a stabilizing cap forms. Below the cap, tubulin dimers are in GDP-bound state, owing to GTPase activity of alpha-tubulin. This is Tubulin beta-3 chain (TUB-3) from Echinococcus multilocularis (Fox tapeworm).